The primary structure comprises 254 residues: Ribosomal RNA large subunit methyltransferase E (254 aa).

A compositionally biased stretch (gly residues) spans Met1 to Gly18. A disordered region spans residues Met1–Val26. S-adenosyl-L-methionine contacts are provided by Gly89, Trp91, Asp119, Asp135, and Asp159. Lys199 acts as the Proton acceptor in catalysis.

Belongs to the class I-like SAM-binding methyltransferase superfamily. RNA methyltransferase RlmE family.

It localises to the cytoplasm. It carries out the reaction uridine(2552) in 23S rRNA + S-adenosyl-L-methionine = 2'-O-methyluridine(2552) in 23S rRNA + S-adenosyl-L-homocysteine + H(+). Specifically methylates the uridine in position 2552 of 23S rRNA at the 2'-O position of the ribose in the fully assembled 50S ribosomal subunit. This chain is Ribosomal RNA large subunit methyltransferase E, found in Parvibaculum lavamentivorans (strain DS-1 / DSM 13023 / NCIMB 13966).